Consider the following 156-residue polypeptide: Class I hydrophobin B (156 aa).

The first 18 residues, 1-18 (MQFTLSAVVLALAGFSAA), serve as a signal peptide directing secretion. 4 disulfide bridges follow: Cys52/Cys130, Cys60/Cys124, Cys61/Cys101, and Cys131/Cys149.

The protein belongs to the fungal hydrophobin family.

The protein resides in the secreted. It localises to the cell wall. Functionally, aerial growth, conidiation, and dispersal of filamentous fungi in the environment rely upon a capability of their secreting small amphipathic proteins called hydrophobins (HPBs) with low sequence identity. Class I can self-assemble into an outermost layer of rodlet bundles on aerial cell surfaces, conferring cellular hydrophobicity that supports fungal growth, development and dispersal; whereas Class II form highly ordered films at water-air interfaces through intermolecular interactions but contribute nothing to the rodlet structure. In P.expansum, hydrophobins contribute to germination, tolerance to cold stress and mycotoxins patulin and citrinin production. HfbA and HfbB are essential for fungal surface hydrophobicity. The protein is Class I hydrophobin B of Penicillium expansum (Blue mold rot fungus).